Reading from the N-terminus, the 429-residue chain is Glutamate-1-semialdehyde 2,1-aminomutase 2 (429 aa).

The residue at position 267 (Lys-267) is an N6-(pyridoxal phosphate)lysine.

It belongs to the class-III pyridoxal-phosphate-dependent aminotransferase family. HemL subfamily. In terms of assembly, homodimer. Pyridoxal 5'-phosphate serves as cofactor.

It is found in the cytoplasm. The catalysed reaction is (S)-4-amino-5-oxopentanoate = 5-aminolevulinate. Its pathway is porphyrin-containing compound metabolism; protoporphyrin-IX biosynthesis; 5-aminolevulinate from L-glutamyl-tRNA(Glu): step 2/2. The polypeptide is Glutamate-1-semialdehyde 2,1-aminomutase 2 (Brevibacillus brevis (strain 47 / JCM 6285 / NBRC 100599)).